Reading from the N-terminus, the 337-residue chain is Holliday junction branch migration complex subunit RuvB (337 aa).

The segment at 1–27 (MIEADRLVHAQPQGTEERDEQIDRAMR) is disordered. The large ATPase domain (RuvB-L) stretch occupies residues 4–187 (ADRLVHAQPQ…FGIPLRLEFY (184 aa)). Residues R27, G68, K71, T72, T73, 134 to 136 (EDY), R177, Y187, and R224 contribute to the ATP site. Residue T72 participates in Mg(2+) binding. The small ATPAse domain (RuvB-S) stretch occupies residues 188–258 (NVKDLSSIVT…VAESALDMLD (71 aa)). Residues 261–337 (VEGFDYMDRK…YQHFNLIQPE (77 aa)) form a head domain (RuvB-H) region. Residues R297, R316, and R321 each contribute to the DNA site.

The protein belongs to the RuvB family. In terms of assembly, homohexamer. Forms an RuvA(8)-RuvB(12)-Holliday junction (HJ) complex. HJ DNA is sandwiched between 2 RuvA tetramers; dsDNA enters through RuvA and exits via RuvB. An RuvB hexamer assembles on each DNA strand where it exits the tetramer. Each RuvB hexamer is contacted by two RuvA subunits (via domain III) on 2 adjacent RuvB subunits; this complex drives branch migration. In the full resolvosome a probable DNA-RuvA(4)-RuvB(12)-RuvC(2) complex forms which resolves the HJ.

It localises to the cytoplasm. The enzyme catalyses ATP + H2O = ADP + phosphate + H(+). In terms of biological role, the RuvA-RuvB-RuvC complex processes Holliday junction (HJ) DNA during genetic recombination and DNA repair, while the RuvA-RuvB complex plays an important role in the rescue of blocked DNA replication forks via replication fork reversal (RFR). RuvA specifically binds to HJ cruciform DNA, conferring on it an open structure. The RuvB hexamer acts as an ATP-dependent pump, pulling dsDNA into and through the RuvAB complex. RuvB forms 2 homohexamers on either side of HJ DNA bound by 1 or 2 RuvA tetramers; 4 subunits per hexamer contact DNA at a time. Coordinated motions by a converter formed by DNA-disengaged RuvB subunits stimulates ATP hydrolysis and nucleotide exchange. Immobilization of the converter enables RuvB to convert the ATP-contained energy into a lever motion, pulling 2 nucleotides of DNA out of the RuvA tetramer per ATP hydrolyzed, thus driving DNA branch migration. The RuvB motors rotate together with the DNA substrate, which together with the progressing nucleotide cycle form the mechanistic basis for DNA recombination by continuous HJ branch migration. Branch migration allows RuvC to scan DNA until it finds its consensus sequence, where it cleaves and resolves cruciform DNA. The protein is Holliday junction branch migration complex subunit RuvB of Shewanella loihica (strain ATCC BAA-1088 / PV-4).